Reading from the N-terminus, the 236-residue chain is CHD1 helical C-terminal domain containing protein 1 (236 aa).

Residues 44 to 145 (LDQDTFKTCK…SSQPAKFLVT (102 aa)) form a CHD1 helical C-terminal domain (CHCT) region. Residues 184 to 236 (LSNMQTPGQGSPLPGQPRSQDHVKKDSLRELSQKPKLKRKRIKEAPETPETEP) form a disordered region. Basic and acidic residues predominate over residues 202–216 (SQDHVKKDSLRELSQ).

The protein resides in the cytoplasm. It localises to the nucleus. In terms of biological role, may play a role in regulation of apoptosis. In Homo sapiens (Human), this protein is CHD1 helical C-terminal domain containing protein 1.